Here is a 59-residue protein sequence, read N- to C-terminus: MRKWVRQAQVDAGARPGTTTEESAEIKRLRRDNAELRRANAILKTASAFFAAELDRPAR.

The interval 1–26 (MRKWVRQAQVDAGARPGTTTEESAEI) is disordered.

Belongs to the transposase 8 family.

This chain is Insertion element IS986 uncharacterized 6.6 kDa protein, found in Mycobacterium tuberculosis.